The sequence spans 414 residues: D-mannose isomerase (414 aa).

Catalysis depends on proton donor/acceptor residues H255 and H390.

The protein belongs to the N-acylglucosamine 2-epimerase family. In terms of assembly, monomer.

It catalyses the reaction D-mannose = D-fructose. Strongly inhibited by Ag(2+), Cu(2+) and cetyltrimethyl ammonium bromide (CTAB). Catalyzes the reversible isomerization of D-mannose to D-fructose. Shows high specific activity towards mannose and fructose, and has no detectable activity towards other monosaccharides and disaccharides. This Pseudomonas cannabina pv. alisalensis protein is D-mannose isomerase.